Reading from the N-terminus, the 721-residue chain is Mitogen-activated protein kinase 6 (721 aa).

Residues 20–316 form the Protein kinase domain; that stretch reads YMDLKPLGCG…AEEALSHPYM (297 aa). Residues 26–34 and Lys-49 each bind ATP; that span reads LGCGGNGLV. Asp-152 (proton acceptor) is an active-site residue. Phosphothreonine is present on Thr-626. The TXY motif lies at 626-628; that stretch reads TSY. Tyr-628 carries the phosphotyrosine modification.

It belongs to the protein kinase superfamily. CMGC Ser/Thr protein kinase family. MAP kinase subfamily. Mg(2+) is required as a cofactor. Dually phosphorylated on Thr-626 and Tyr-628, which activates the enzyme.

The catalysed reaction is L-seryl-[protein] + ATP = O-phospho-L-seryl-[protein] + ADP + H(+). It catalyses the reaction L-threonyl-[protein] + ATP = O-phospho-L-threonyl-[protein] + ADP + H(+). Activated by threonine and tyrosine phosphorylation. Its function is as follows. Phosphorylates microtubule-associated protein 2 (MAP2). May promote entry in the cell cycle. The protein is Mitogen-activated protein kinase 6 (MAPK6) of Gallus gallus (Chicken).